The following is a 178-amino-acid chain: Killin (178 aa).

The DNA-binding element occupies 8–50; the sequence is SARPGRTVHVWGYRVEWKVRNGRKLQPSEWAGRGDLGGFKRRW.

It is found in the nucleus. Its function is as follows. DNA-binding protein involved in S phase checkpoint control-coupled apoptosis by mediating p53/TP53-induced apoptosis. Has the ability to inhibit DNA synthesis and S phase arrest coupled to apoptosis. Has affinity to both double- and single-stranded DNA. The chain is Killin (KLLN) from Homo sapiens (Human).